Here is a 204-residue protein sequence, read N- to C-terminus: uncharacterized protein (204 aa).

Positions 1-16 (MKYTFLAVLSAVTVLA) are cleaved as a signal peptide.

It is found in the secreted. This is an uncharacterized protein from Arthroderma benhamiae (strain ATCC MYA-4681 / CBS 112371) (Trichophyton mentagrophytes).